The sequence spans 212 residues: Adenine phosphoribosyltransferase (212 aa).

Belongs to the purine/pyrimidine phosphoribosyltransferase family. Homodimer.

It localises to the cytoplasm. It catalyses the reaction AMP + diphosphate = 5-phospho-alpha-D-ribose 1-diphosphate + adenine. It participates in purine metabolism; AMP biosynthesis via salvage pathway; AMP from adenine: step 1/1. In terms of biological role, catalyzes a salvage reaction resulting in the formation of AMP, that is energically less costly than de novo synthesis. This is Adenine phosphoribosyltransferase from Mycobacterium tuberculosis (strain ATCC 25618 / H37Rv).